Reading from the N-terminus, the 254-residue chain is 5-oxoprolinase subunit A (254 aa).

Belongs to the LamB/PxpA family. As to quaternary structure, forms a complex composed of PxpA, PxpB and PxpC.

It carries out the reaction 5-oxo-L-proline + ATP + 2 H2O = L-glutamate + ADP + phosphate + H(+). Catalyzes the cleavage of 5-oxoproline to form L-glutamate coupled to the hydrolysis of ATP to ADP and inorganic phosphate. In Burkholderia mallei (strain NCTC 10247), this protein is 5-oxoprolinase subunit A.